Reading from the N-terminus, the 80-residue chain is Acyl carrier protein (80 aa).

One can recognise a Carrier domain in the interval 4–79 (EEIKDKVFDI…QAIDYIVNAK (76 aa)). An O-(pantetheine 4'-phosphoryl)serine modification is found at Ser39.

It belongs to the acyl carrier protein (ACP) family. In terms of processing, 4'-phosphopantetheine is transferred from CoA to a specific serine of apo-ACP by AcpS. This modification is essential for activity because fatty acids are bound in thioester linkage to the sulfhydryl of the prosthetic group.

It localises to the cytoplasm. It functions in the pathway lipid metabolism; fatty acid biosynthesis. Its function is as follows. Carrier of the growing fatty acid chain in fatty acid biosynthesis. The sequence is that of Acyl carrier protein from Prosthecochloris aestuarii (strain DSM 271 / SK 413).